Consider the following 250-residue polypeptide: Probable transcriptional regulatory protein ROP_68700 (250 aa).

Belongs to the TACO1 family.

It localises to the cytoplasm. The chain is Probable transcriptional regulatory protein ROP_68700 from Rhodococcus opacus (strain B4).